A 143-amino-acid chain; its full sequence is Peptide methionine sulfoxide reductase MsrB (143 aa).

The MsrB domain occupies 16 to 139 (DAELRRRLTP…NSAALNFESR (124 aa)). Residues C55, C58, C104, and C107 each coordinate Zn(2+). C128 serves as the catalytic Nucleophile.

The protein belongs to the MsrB Met sulfoxide reductase family. The cofactor is Zn(2+).

The enzyme catalyses L-methionyl-[protein] + [thioredoxin]-disulfide + H2O = L-methionyl-(R)-S-oxide-[protein] + [thioredoxin]-dithiol. The chain is Peptide methionine sulfoxide reductase MsrB from Burkholderia multivorans (strain ATCC 17616 / 249).